The sequence spans 256 residues: Hydroxyacylglutathione hydrolase (256 aa).

Positions 55, 57, 59, 60, 113, 130, and 168 each coordinate Zn(2+).

Belongs to the metallo-beta-lactamase superfamily. Glyoxalase II family. As to quaternary structure, monomer. Requires Zn(2+) as cofactor.

It carries out the reaction an S-(2-hydroxyacyl)glutathione + H2O = a 2-hydroxy carboxylate + glutathione + H(+). The protein operates within secondary metabolite metabolism; methylglyoxal degradation; (R)-lactate from methylglyoxal: step 2/2. Its function is as follows. Thiolesterase that catalyzes the hydrolysis of S-D-lactoyl-glutathione to form glutathione and D-lactic acid. The chain is Hydroxyacylglutathione hydrolase from Alkalilimnicola ehrlichii (strain ATCC BAA-1101 / DSM 17681 / MLHE-1).